The following is a 637-amino-acid chain: tRNA uridine 5-carboxymethylaminomethyl modification enzyme MnmG (637 aa).

Residue 18 to 23 (GAGHAG) participates in FAD binding. 282 to 296 (GPRYCPSIEDKIVRF) lines the NAD(+) pocket.

It belongs to the MnmG family. In terms of assembly, homodimer. Heterotetramer of two MnmE and two MnmG subunits. FAD is required as a cofactor.

The protein localises to the cytoplasm. NAD-binding protein involved in the addition of a carboxymethylaminomethyl (cmnm) group at the wobble position (U34) of certain tRNAs, forming tRNA-cmnm(5)s(2)U34. This Pediococcus pentosaceus (strain ATCC 25745 / CCUG 21536 / LMG 10740 / 183-1w) protein is tRNA uridine 5-carboxymethylaminomethyl modification enzyme MnmG.